A 146-amino-acid polypeptide reads, in one-letter code: Snaclec agkicetin-C subunit beta (146 aa).

The first 23 residues, 1-23 (MGRFIFVSFGLLVVFLSLSGTGA), serve as a signal peptide directing secretion. Disulfide bonds link C25/C36, C53/C142, and C119/C134. One can recognise a C-type lectin domain in the interval 32-143 (YEGNCYLVVK…CSRTQPFVCK (112 aa)).

Belongs to the snaclec family. In terms of assembly, heterodimer of subunits alpha and beta; disulfide-linked. In terms of tissue distribution, expressed by the venom gland.

Its subcellular location is the secreted. Is a potent glycoprotein Ibalpha (GP1BA) antagonist. Concentration-dependently inhibits botrocetin-, ristocetin- and low dose thrombin-induced platelet aggregation. Inhibits platelet adhesion only through inhibiting the vWF interaction with GP1BA, but has minimal effect on other platelet receptors, such as alpha-IIb/beta-3 (ITGA2B/ITGB3) or alpha-2/beta-1 (ITGA2/ITGB1). Causes an instant severe thrombocytopenia in rats and is not lethal to mice. This is Snaclec agkicetin-C subunit beta from Deinagkistrodon acutus (Hundred-pace snake).